Reading from the N-terminus, the 89-residue chain is Large ribosomal subunit protein bL27 (89 aa).

This sequence belongs to the bacterial ribosomal protein bL27 family.

In Synechococcus sp. (strain JA-3-3Ab) (Cyanobacteria bacterium Yellowstone A-Prime), this protein is Large ribosomal subunit protein bL27.